The following is a 483-amino-acid chain: Altronate oxidoreductase (483 aa).

18–29 (IIQFGEGNFLRA) contacts NAD(+).

Belongs to the mannitol dehydrogenase family. UxaB subfamily.

The enzyme catalyses D-altronate + NAD(+) = keto-D-tagaturonate + NADH + H(+). It functions in the pathway carbohydrate metabolism; pentose and glucuronate interconversion. This chain is Altronate oxidoreductase (uxaB), found in Escherichia coli O157:H7.